The primary structure comprises 637 residues: Poly(U)-binding-splicing factor hfp (637 aa).

2 stretches are compositionally biased toward basic and acidic residues: residues 1–20 and 28–37; these read MGSNDRASRSPRSDDQREIS and TRSDSGKSTD. The disordered stretch occupies residues 1–41; it reads MGSNDRASRSPRSDDQREISDMPATKRTRSDSGKSTDSKIP. Phosphoserine occurs at positions 13 and 30. RRM domains are found at residues 130–208 and 227–305; these read CRVY…RPSN and NRIY…RSIT. Positions 537-627 constitute an RRM 3; atypical domain; sequence RVIILRNMVG…RRVVAELYDQ (91 aa).

It belongs to the RRM half pint family. Interacts with enc. However, given the cytoplasmic localization of enc, the relevance of such interaction is unclear. In terms of tissue distribution, expressed in all germline cells and within the follicle cell.

Its subcellular location is the nucleus. In terms of biological role, splicing factor that regulates oogenesis and controls both mitosis and mRNA localization in the germline by regulating mRNA splicing of a subset of genes within the ovary. Probably acts by regulating the alternative splice site selection of the otu transcript. Also regulates the alternative splicing of eIF4E1 and grk, while it is not involved in the splicing of par-1, sqd or psq. Involved in the alternative splicing of the bicistronic pre-mRNA encoding Kdm3 and CG8176; required for the efficient production of mRNA encoding Kdm3 and Kdm3-mediated regulation of rhino-dependent piRNA production. The sequence is that of Poly(U)-binding-splicing factor hfp from Drosophila melanogaster (Fruit fly).